We begin with the raw amino-acid sequence, 388 residues long: Formate-dependent phosphoribosylglycinamide formyltransferase (388 aa).

N(1)-(5-phospho-beta-D-ribosyl)glycinamide-binding positions include 21–22 and glutamate 81; that span reads EL. ATP-binding positions include arginine 113, lysine 154, 159–164, 193–196, and glutamate 201; these read SSGHGQ and EEFI. The 189-residue stretch at 118–306 folds into the ATP-grasp domain; that stretch reads KFAAEELGLK…EFALHVRAVL (189 aa). Residues glutamate 265 and glutamate 277 each contribute to the Mg(2+) site. Residues aspartate 284, lysine 352, and 359-360 each bind N(1)-(5-phospho-beta-D-ribosyl)glycinamide; that span reads RR.

The protein belongs to the PurK/PurT family. As to quaternary structure, homodimer.

The catalysed reaction is N(1)-(5-phospho-beta-D-ribosyl)glycinamide + formate + ATP = N(2)-formyl-N(1)-(5-phospho-beta-D-ribosyl)glycinamide + ADP + phosphate + H(+). It functions in the pathway purine metabolism; IMP biosynthesis via de novo pathway; N(2)-formyl-N(1)-(5-phospho-D-ribosyl)glycinamide from N(1)-(5-phospho-D-ribosyl)glycinamide (formate route): step 1/1. Involved in the de novo purine biosynthesis. Catalyzes the transfer of formate to 5-phospho-ribosyl-glycinamide (GAR), producing 5-phospho-ribosyl-N-formylglycinamide (FGAR). Formate is provided by PurU via hydrolysis of 10-formyl-tetrahydrofolate. This Nitratiruptor sp. (strain SB155-2) protein is Formate-dependent phosphoribosylglycinamide formyltransferase.